The chain runs to 633 residues: Probable potassium transport system protein Kup 2 (633 aa).

Transmembrane regions (helical) follow at residues 18 to 38, 61 to 81, 107 to 127, 143 to 163, 176 to 196, 211 to 231, 255 to 275, 293 to 313, 345 to 365, 371 to 391, 402 to 422, and 429 to 449; these read FVGL…TSPL, LISL…VLFL, VPVL…DAMI, ITPA…IVLF, FFGP…VIHI, ALSF…AVFL, WFVL…ALVL, ALLP…QAVI, IYVP…IFSF, LATA…MLAF, FMLA…FLAA, and DGGW…WTWT.

Belongs to the HAK/KUP transporter (TC 2.A.72) family.

The protein localises to the cell inner membrane. It carries out the reaction K(+)(in) + H(+)(in) = K(+)(out) + H(+)(out). Its function is as follows. Transport of potassium into the cell. Likely operates as a K(+):H(+) symporter. This Rhizobium etli (strain ATCC 51251 / DSM 11541 / JCM 21823 / NBRC 15573 / CFN 42) protein is Probable potassium transport system protein Kup 2.